The sequence spans 92 residues: Large ribosomal subunit protein bL36m (92 aa).

Residues methionine 1–glycine 54 constitute a mitochondrion transit peptide.

The protein belongs to the bacterial ribosomal protein bL36 family. In terms of assembly, component of the mitochondrial large ribosomal subunit (mt-LSU). Mature yeast 74S mitochondrial ribosomes consist of a small (37S) and a large (54S) subunit. The 37S small subunit contains a 15S ribosomal RNA (15S mt-rRNA) and at least 32 different proteins. The 54S large subunit contains a 21S rRNA (21S mt-rRNA) and at least 45 different proteins. bL36m has a zinc binding site.

The protein localises to the mitochondrion. Its function is as follows. Component of the mitochondrial ribosome (mitoribosome), a dedicated translation machinery responsible for the synthesis of mitochondrial genome-encoded proteins, including at least some of the essential transmembrane subunits of the mitochondrial respiratory chain. The mitoribosomes are attached to the mitochondrial inner membrane and translation products are cotranslationally integrated into the membrane. bL36m may be involved in a process influencing telomere capping. The sequence is that of Large ribosomal subunit protein bL36m (rtc6) from Schizosaccharomyces pombe (strain 972 / ATCC 24843) (Fission yeast).